We begin with the raw amino-acid sequence, 153 residues long: Histone H2B.10 (153 aa).

Basic and acidic residues-rich tracts occupy residues 1–28 (MAPKAEKKPAAKKPAEEEPAAEKAEKAL) and 36–53 (EKRLPAGKAEKSSGEGKK). A disordered region spans residues 1 to 61 (MAPKAEKKPA…KKAGRKKAKK (61 aa)). An N6-acetyllysine mark is found at lysine 7 and lysine 37. A Glycyl lysine isopeptide (Lys-Gly) (interchain with G-Cter in ubiquitin) cross-link involves residue lysine 149.

The protein belongs to the histone H2B family. The nucleosome is a histone octamer containing two molecules each of H2A, H2B, H3 and H4 assembled in one H3-H4 heterotetramer and two H2A-H2B heterodimers. The octamer wraps approximately 147 bp of DNA. Can be acetylated to form H2BK6ac and H2BK33ac. Post-translationally, monoubiquitinated by BRE1 to form H2BK143ub1 and deubiquitinated by UBP26. Required for heterochromatic histone H3 di- and trimethylation at H3K4me. May give a specific tag for epigenetic transcriptional activation.

It localises to the nucleus. It is found in the chromosome. Its function is as follows. Core component of nucleosome. Nucleosomes wrap and compact DNA into chromatin, limiting DNA accessibility to the cellular machineries which require DNA as a template. Histones thereby play a central role in transcription regulation, DNA repair, DNA replication and chromosomal stability. DNA accessibility is regulated via a complex set of post-translational modifications of histones, also called histone code, and nucleosome remodeling. This is Histone H2B.10 (H2B.10) from Oryza sativa subsp. japonica (Rice).